Consider the following 163-residue polypeptide: Neurotrophin-3 (163 aa).

The first 3 residues, Ile1–Ser3, serve as a signal peptide directing secretion. Residues Ser4–Arg119 constitute a propeptide that is removed on maturation. The segment at Gln36–Gln61 is disordered. Positions Lys49–Gln61 are enriched in basic and acidic residues. N-linked (GlcNAc...) asparagine glycosylation occurs at Asn112.

This sequence belongs to the NGF-beta family.

It localises to the secreted. Seems to promote the survival of visceral and proprioceptive sensory neurons. The chain is Neurotrophin-3 (NTF3) from Boa constrictor (Boa).